A 385-amino-acid chain; its full sequence is Chorismate synthase (385 aa).

NADP(+)-binding residues include R40 and R46. Residues 128–130 (RAS), 248–249 (QA), G293, 308–312 (KAIPS), and R334 contribute to the FMN site.

The protein belongs to the chorismate synthase family. Homotetramer. The cofactor is FMNH2.

It catalyses the reaction 5-O-(1-carboxyvinyl)-3-phosphoshikimate = chorismate + phosphate. It functions in the pathway metabolic intermediate biosynthesis; chorismate biosynthesis; chorismate from D-erythrose 4-phosphate and phosphoenolpyruvate: step 7/7. Catalyzes the anti-1,4-elimination of the C-3 phosphate and the C-6 proR hydrogen from 5-enolpyruvylshikimate-3-phosphate (EPSP) to yield chorismate, which is the branch point compound that serves as the starting substrate for the three terminal pathways of aromatic amino acid biosynthesis. This reaction introduces a second double bond into the aromatic ring system. The chain is Chorismate synthase from Endomicrobium trichonymphae.